A 3890-amino-acid polypeptide reads, in one-letter code: Extracellular matrix-binding protein EbhB (3890 aa).

An N-terminal signal peptide occupies residues 1-39 (MNYRDKIQKFSIRKYTVGTFSTVIATLVFLGFNTSQAHA). Polar residues predominate over residues 41–59 (ETNQPASVVKQKQQSNNEQ). Disordered regions lie at residues 41-152 (ETNQ…GNDN), 249-277 (MPQRQQTSRRSNRIQTRSVESRAAEPRSV), 1347-1372 (NEKAQAEAGGRPNYRTTGYSQSNATT), and 2418-2438 (TITPKAGTGHSVSSNPSTLTA). The span at 65-78 (SQVQNSQNSQNSQS) shows a compositional bias: low complexity. The segment covering 79-117 (LSATHENEQPNNSQANLVNQKVAQSSTTNDEQPASQNVN) has biased composition (polar residues). The segment covering 130–140 (PDKEESKHKQN) has biased composition (basic and acidic residues). 4 stretches are compositionally biased toward polar residues: residues 141–151 (ESQSANKNGND), 250–266 (PQRQQTSRRSNRIQTRS), 1360–1372 (YRTTGYSQSNATT), and 2427–2438 (HSVSSNPSTLTA). FIVAR domains are found at residues 2524–2580 (AKNH…VSDA), 2610–2666 (SKNN…ISDE), 2687–2750 (DTHA…VQSA), 2780–2836 (AKTK…IAAE), 2864–2919 (AKTQ…IRQN), 2947–3002 (AKNQ…INTN), 3030–3085 (AKTQ…INDK), 3154–3212 (AMTK…VNQK), 3280–3339 (AMTG…VNNA), 3407–3465 (AMGN…VNRA), 3533–3591 (AMGN…VTEA), 3659–3717 (AMNT…ITQK), and 3785–3843 (AMAN…VEAA).

This chain is Extracellular matrix-binding protein EbhB (ebhB), found in Staphylococcus aureus (strain N315).